Reading from the N-terminus, the 174-residue chain is RNA pyrophosphohydrolase (174 aa).

The 144-residue stretch at 6–149 (GFRANVGIII…KRDVYRKVMK (144 aa)) folds into the Nudix hydrolase domain. Residues 38 to 59 (GGVDEGESAEQAMYRELYEEVG) carry the Nudix box motif.

Belongs to the Nudix hydrolase family. RppH subfamily. A divalent metal cation is required as a cofactor.

Its function is as follows. Accelerates the degradation of transcripts by removing pyrophosphate from the 5'-end of triphosphorylated RNA, leading to a more labile monophosphorylated state that can stimulate subsequent ribonuclease cleavage. The sequence is that of RNA pyrophosphohydrolase from Shewanella loihica (strain ATCC BAA-1088 / PV-4).